An 878-amino-acid chain; its full sequence is MTKFTTEEVRSKFITYFKANNHTHVPASSLIPHNDPSLMFVNSGMVQFKNVFTGQEKRPYNKAVTSQKSLRAGGKHNDLENVGYTARHHTFFEMLGNFSFGDYFKEQAIYYAWNLLTKEFELPKDKLYVTVYHTDEEAASYWKKIAGFRDDRIIRIKTNDNFWSMGDTGPCGPCSEIFYDHGEQIYGGLPGTKDEDGDRFIEIWNMVFMQYEQIDKDTRIELPQKSIDTGMGLERMTAVLQHVNNNYDIDLFQEIINFTENIVKVKIEGEAKFSYRVIADHLRASSFLIADGVIPSNEGRGYVLRRIMRRAMRHAHMLGSKEPLMYKLLPKLVDLMGNVYPELKRAESFISSILEQEEIRFKTTLERGLKLLTEETETLTKGNELSGEIAFKLYDTYGFPLDLTEDILKNRDISVDHKRFEEQMLAQKERARKSWLGSGESKTDQLWFDIKEQHGSTEFLGYTLNEAECKIIALIKDNNLVNDIKEIDTQFLLISNQTPFYGESGGQMGDIGMIFSKDSEIEVIDTLKYLGSIIVHKCILKKGQIKIGENANFSIDIKYRQNLRIHHSATHILHAVLHEVLGKHVTQKGSLVAPTYLRFDISHSKAVTNEEITLIEDKVNEIIRDNHEVDTTLMTTEDAVKQGAMALFGEKYDSEVRVVKMGETSLELCGGTHVRRTGDIGCFKITSESAIAAGVRRIEAVCGEFVIKLMREKDSLLKSIESSLKTNKNELITKVNNILERNKELEKELEKVHLARLDLSIEQIEKQAEDIKGVKLIYRYIENLDNKVLRQAAENLTKKVEDLIVVYITGNNDKLSITVAVSKAITDKYKAGIIAKELSLFLGGSGGGGQASLAQAGGNDIGKLTNIQEKLHGLLTVS.

Zn(2+) is bound by residues His567, His571, Cys669, and His673.

It belongs to the class-II aminoacyl-tRNA synthetase family. Zn(2+) is required as a cofactor.

The protein localises to the cytoplasm. The catalysed reaction is tRNA(Ala) + L-alanine + ATP = L-alanyl-tRNA(Ala) + AMP + diphosphate. Its function is as follows. Catalyzes the attachment of alanine to tRNA(Ala) in a two-step reaction: alanine is first activated by ATP to form Ala-AMP and then transferred to the acceptor end of tRNA(Ala). Also edits incorrectly charged Ser-tRNA(Ala) and Gly-tRNA(Ala) via its editing domain. In Rickettsia felis (strain ATCC VR-1525 / URRWXCal2) (Rickettsia azadi), this protein is Alanine--tRNA ligase.